Reading from the N-terminus, the 556-residue chain is Small ribosomal subunit protein uS3m (556 aa).

This sequence belongs to the universal ribosomal protein uS3 family. As to quaternary structure, component of the mitochondrial ribosome small subunit.

The protein resides in the mitochondrion. This is Small ribosomal subunit protein uS3m (RPS3) from Arabidopsis thaliana (Mouse-ear cress).